The chain runs to 213 residues: Peroxiredoxin-5, mitochondrial (213 aa).

Residues 1 to 51 (MVQLRFCVLGSIAGSVLRASATWTCVAGRAGRKGAGWECGGARSFSSAAVT) constitute a mitochondrion transit peptide. Positions 55–213 (IKVGDTIPSV…SLAPNILSQL (159 aa)) constitute a Thioredoxin domain. At Lys-74 the chain carries N6-acetyllysine. N6-acetyllysine; alternate is present on Lys-82. Position 82 is an N6-succinyllysine; alternate (Lys-82). Cys-99 serves as the catalytic Cysteine sulfenic acid (-SOH) intermediate. Cys-99 carries S-palmitoyl cysteine lipidation. An intrachain disulfide couples Cys-99 to Cys-203. An N6-succinyllysine modification is found at Lys-115. Phosphoserine is present on residues Ser-170 and Ser-181. Positions 211-213 (SQL) match the Microbody targeting signal motif.

The protein belongs to the peroxiredoxin family. Prx5 subfamily. Monomer. S-palmitoylated. Palmitoylation occurs on the active site, inhibiting its reactivity; therefore PRDX5 palmitoylation status determines its antioxidant capacity. Post-translationally, S-palmitoylated. Depalmitoylated by ABHD10.

It localises to the mitochondrion. The protein localises to the cytoplasm. It is found in the peroxisome matrix. The catalysed reaction is a hydroperoxide + [thioredoxin]-dithiol = an alcohol + [thioredoxin]-disulfide + H2O. Functionally, thiol-specific peroxidase that catalyzes the reduction of hydrogen peroxide and organic hydroperoxides to water and alcohols, respectively. Plays a role in cell protection against oxidative stress by detoxifying peroxides and as sensor of hydrogen peroxide-mediated signaling events. The sequence is that of Peroxiredoxin-5, mitochondrial from Rattus norvegicus (Rat).